We begin with the raw amino-acid sequence, 274 residues long: MQQLQNVIEAAFERRADITPVNADTAIREAVSQVIALLDSGALRVAEKIDGQWVTHQWLKKAVLLSFRINDNQVIEGAESRFYDKVPMKFADYDEARFKKEGFRVVPPAAVRQGSFIARNTVLMPSYVNIGAYVDEGSMVDTWATVGSCAQIGKNVHLSGGVGIGGVLEPLQANPTIIEDNCFIGARSEIVEGVIVEEGSVISMGVYIGQSTKIYDRETGEVHYGRVPAGSVVVSGNLPSKDGSYSLYCAVIVKKVDAKTLSKTGINELLRTID.

It belongs to the transferase hexapeptide repeat family.

The protein resides in the cytoplasm. The enzyme catalyses (S)-2,3,4,5-tetrahydrodipicolinate + succinyl-CoA + H2O = (S)-2-succinylamino-6-oxoheptanedioate + CoA. Its pathway is amino-acid biosynthesis; L-lysine biosynthesis via DAP pathway; LL-2,6-diaminopimelate from (S)-tetrahydrodipicolinate (succinylase route): step 1/3. The sequence is that of 2,3,4,5-tetrahydropyridine-2,6-dicarboxylate N-succinyltransferase from Erwinia tasmaniensis (strain DSM 17950 / CFBP 7177 / CIP 109463 / NCPPB 4357 / Et1/99).